Here is a 562-residue protein sequence, read N- to C-terminus: Formate--tetrahydrofolate ligase (562 aa).

71–78 is a binding site for ATP; the sequence is TPAGEGKS.

Belongs to the formate--tetrahydrofolate ligase family.

The catalysed reaction is (6S)-5,6,7,8-tetrahydrofolate + formate + ATP = (6R)-10-formyltetrahydrofolate + ADP + phosphate. Its pathway is one-carbon metabolism; tetrahydrofolate interconversion. This chain is Formate--tetrahydrofolate ligase, found in Bacillus cereus (strain ATCC 10987 / NRS 248).